Here is a 214-residue protein sequence, read N- to C-terminus: MKFFIDTADVKEIREAHELGVVDGVTTNPSLIAKSGRKFADVIKEISGIVDGPISAEVVSLEHDGMISEAEELVKIHPNIVIKLPMTPEGLKATKTLSAKGIKTNVTLIFTPMQALLAAKAGATYVSPFVGRLDDISQDGMGIIEEIRTIFDNYGYTAEIIVASIRNPIHVLNSALIGADVATIPFSVIMQLAKHPLTDAGIKKFLEDWEKVPK.

Lys83 serves as the catalytic Schiff-base intermediate with substrate.

It belongs to the transaldolase family. Type 3B subfamily.

Its subcellular location is the cytoplasm. The catalysed reaction is D-sedoheptulose 7-phosphate + D-glyceraldehyde 3-phosphate = D-erythrose 4-phosphate + beta-D-fructose 6-phosphate. It functions in the pathway carbohydrate degradation; pentose phosphate pathway; D-glyceraldehyde 3-phosphate and beta-D-fructose 6-phosphate from D-ribose 5-phosphate and D-xylulose 5-phosphate (non-oxidative stage): step 2/3. Functionally, transaldolase is important for the balance of metabolites in the pentose-phosphate pathway. The protein is Probable transaldolase of Geotalea daltonii (strain DSM 22248 / JCM 15807 / FRC-32) (Geobacter daltonii).